We begin with the raw amino-acid sequence, 184 residues long: Chaperone protein dnaJ 72 (184 aa).

Positions 3–73 (DHYQVLGVTR…LKRASYNAGS (71 aa)) constitute a J domain. The chain crosses the membrane as a helical span at residues 133-150 (FLLNLALAGGLYFAFTAI).

Belongs to the DnaJ family. C/III subfamily.

Its subcellular location is the membrane. Plays a continuous role in plant development probably in the structural organization of compartments. This chain is Chaperone protein dnaJ 72 (ATJ72), found in Arabidopsis thaliana (Mouse-ear cress).